Consider the following 90-residue polypeptide: UPF0297 protein Swol_0469 (90 aa).

This sequence belongs to the UPF0297 family.

This chain is UPF0297 protein Swol_0469, found in Syntrophomonas wolfei subsp. wolfei (strain DSM 2245B / Goettingen).